Consider the following 245-residue polypeptide: tRNA pseudouridine synthase A (245 aa).

The active-site Nucleophile is the D52. Y111 contacts substrate.

The protein belongs to the tRNA pseudouridine synthase TruA family. In terms of assembly, homodimer.

It carries out the reaction uridine(38/39/40) in tRNA = pseudouridine(38/39/40) in tRNA. Functionally, formation of pseudouridine at positions 38, 39 and 40 in the anticodon stem and loop of transfer RNAs. In Xanthobacter autotrophicus (strain ATCC BAA-1158 / Py2), this protein is tRNA pseudouridine synthase A.